We begin with the raw amino-acid sequence, 177 residues long: Outer membrane lipoprotein Blc (177 aa).

Residues 1–18 form the signal peptide; the sequence is MRLLPLVAAATAAFLVVA. Residue Cys19 is the site of N-palmitoyl cysteine attachment. Cys19 is lipidated: S-diacylglycerol cysteine.

It belongs to the calycin superfamily. Lipocalin family. As to quaternary structure, homodimer.

The protein localises to the cell outer membrane. Functionally, involved in the storage or transport of lipids necessary for membrane maintenance under stressful conditions. Displays a binding preference for lysophospholipids. In Escherichia coli O157:H7, this protein is Outer membrane lipoprotein Blc (blc).